An 874-amino-acid chain; its full sequence is Oxidation resistance protein 1 (874 aa).

The tract at residues 1 to 89 (MTKDKNSPGL…KTLDKKDGRR (89 aa)) is disordered. Residues 64–89 (RRSELKRFYTIDTGQKKTLDKKDGRR) are compositionally biased toward basic and acidic residues. Ser-91 carries the post-translational modification Phosphoserine. In terms of domain architecture, LysM spans 99 to 142 (IEYTVESRDSLNSIALKFDTTPNELVQLNKLFSRAVVTGQVLYV). Thr-119 carries the post-translational modification Phosphothreonine. Residues 151–169 (VESSPSLSPVSPLSPTSSE) show a composition bias toward low complexity. The interval 151–194 (VESSPSLSPVSPLSPTSSEAEFDKTTNPDVHPTEATPSSTFTGI) is disordered. Ser-201, Ser-202, and Ser-204 each carry phosphoserine. The 68-residue stretch at 208 to 275 (EAFTEKFLKI…EEVMSAAMYK (68 aa)) folds into the GRAM domain. Ser-294, Ser-334, and Ser-336 each carry phosphoserine. Disordered regions lie at residues 299 to 406 (CHSK…TNEV) and 431 to 537 (FQGI…ITSA). Phosphothreonine is present on Thr-341. Ser-346 is subject to Phosphoserine. Over residues 347 to 362 (PIREELVSSDELRQDK) the composition is skewed to basic and acidic residues. Polar residues predominate over residues 363–391 (SSGASSESVQTVNQAEVESLTVKSESTGT). Over residues 452–466 (SFLHENSLHQEESQK) the composition is skewed to basic and acidic residues. At Ser-496 the chain carries Phosphoserine. Residues 510–527 (HTMQQTKQQRENIQQVSQ) are compositionally biased toward polar residues. Residues 551–578 (QRHRLHKFLCLRVGKPMRKTFVSQASAT) form a mediates oxidative antimutator activity region. The TLDc domain occupies 713–874 (ELLLPDQIEK…IQDIEIWAFE (162 aa)).

This sequence belongs to the OXR1 family.

The protein resides in the mitochondrion. Functionally, may be involved in protection from oxidative damage. The chain is Oxidation resistance protein 1 (OXR1) from Homo sapiens (Human).